Reading from the N-terminus, the 237-residue chain is uncharacterized protein (237 aa).

The segment at residues 1 to 25 is a signal peptide (tat-type signal); sequence MRHIFQRLLPRRLWLAGLPCLALLG. A disordered region spans residues 201 to 237; sequence IERQLSTRKPAGNFSPDTPHESEKPAPSTHEVTPDEP.

Exported by the Tat system. The position of the signal peptide cleavage has not been experimentally proven. Can also be exported by the Sec system.

This is an uncharacterized protein from Escherichia coli (strain K12).